The sequence spans 177 residues: R-phycoerythrin beta chain (177 aa).

Phycourobilin contacts are provided by Cys50 and Cys61. The residue at position 72 (Asn72) is an N4-methylasparagine. The (2R,3E)-phycoerythrobilin site is built by Cys82 and Cys158.

The protein belongs to the phycobiliprotein family. In terms of assembly, heterodimer of an alpha and a beta chain. Post-translationally, contains two covalently linked phycoerythrobilin chromophores and one covalently linked phycourobilin chromophore.

The protein resides in the plastid. It is found in the chloroplast thylakoid membrane. Functionally, light-harvesting photosynthetic bile pigment-protein from the phycobiliprotein complex. The sequence is that of R-phycoerythrin beta chain (cpeB) from Pyropia haitanensis (Red seaweed).